The sequence spans 387 residues: Acetylornithine aminotransferase (387 aa).

Pyridoxal 5'-phosphate-binding positions include 97 to 98 (GT) and phenylalanine 130. Arginine 133 is a binding site for N(2)-acetyl-L-ornithine. Residue 215-218 (DEVQ) participates in pyridoxal 5'-phosphate binding. Lysine 244 carries the post-translational modification N6-(pyridoxal phosphate)lysine. Threonine 273 is a binding site for pyridoxal 5'-phosphate.

Belongs to the class-III pyridoxal-phosphate-dependent aminotransferase family. ArgD subfamily. As to quaternary structure, homodimer. Pyridoxal 5'-phosphate is required as a cofactor.

Its subcellular location is the cytoplasm. The catalysed reaction is N(2)-acetyl-L-ornithine + 2-oxoglutarate = N-acetyl-L-glutamate 5-semialdehyde + L-glutamate. It functions in the pathway amino-acid biosynthesis; L-arginine biosynthesis; N(2)-acetyl-L-ornithine from L-glutamate: step 4/4. The chain is Acetylornithine aminotransferase from Clostridium acetobutylicum (strain ATCC 824 / DSM 792 / JCM 1419 / IAM 19013 / LMG 5710 / NBRC 13948 / NRRL B-527 / VKM B-1787 / 2291 / W).